We begin with the raw amino-acid sequence, 398 residues long: ATP-dependent RNA helicase eIF4A (398 aa).

Positions 25–53 (DSFDAMNLRAELLRGVYAYGFERPSAIQQ) match the Q motif motif. The Helicase ATP-binding domain maps to 56–226 (IMPVIKGSDV…TKFMRDPVRI (171 aa)). 69–76 (AQSGTGKT) is a binding site for ATP. Positions 174–177 (DEAD) match the DEAD box motif. Positions 237 to 398 (GIKQFYIAVE…EMPMNVADLI (162 aa)) constitute a Helicase C-terminal domain.

This sequence belongs to the DEAD box helicase family. eIF4A subfamily. Component of the eIF4F complex, which composition varies with external and internal environmental conditions. It is composed of at least eIF4A, eIF4E and eIF4G.

It is found in the cytoplasm. It catalyses the reaction ATP + H2O = ADP + phosphate + H(+). Its function is as follows. ATP-dependent RNA helicase which is a subunit of the eIF4F complex involved in cap recognition and is required for mRNA binding to ribosome. In the current model of translation initiation, eIF4A unwinds RNA secondary structures in the 5'-UTR of mRNAs which is necessary to allow efficient binding of the small ribosomal subunit, and subsequent scanning for the initiator codon. The protein is ATP-dependent RNA helicase eIF4A (TIF1) of Coccidioides immitis (strain RS) (Valley fever fungus).